Reading from the N-terminus, the 403-residue chain is TPR repeat-containing protein Synpcc7942_0270 (403 aa).

TPR repeat units follow at residues 208–243, 244–282, 283–316, 317–350, and 351–387; these read AYLCSKLGGLLVQEGDLKAAQRWLKQGLKQGRPEPA, VRYELLYHLALLERRQGDLDAAIDRYQAALQEPVDAIHK, LGAWVNLSHLYRDRGQLGLAYDAARQAVAAAPQA, TVALTALGLAARAIGNYPEAIAAYQQALQLDPND, and PSLYQNLGAVLFQVGQLEASYAAFRQAIAGYEQQGSP.

The sequence is that of TPR repeat-containing protein Synpcc7942_0270 from Synechococcus elongatus (strain ATCC 33912 / PCC 7942 / FACHB-805) (Anacystis nidulans R2).